The following is a 396-amino-acid chain: Elongation factor Tu (396 aa).

In terms of domain architecture, tr-type G spans 10–206 (KPHVNIGTIG…ACDTYIPAPV (197 aa)). A G1 region spans residues 19–26 (GHVDHGKT). Residue 19 to 26 (GHVDHGKT) coordinates GTP. Position 26 (Thr-26) interacts with Mg(2+). The segment at 60–64 (GITIS) is G2. Residues 81–84 (DCPG) form a G3 region. GTP-binding positions include 81-85 (DCPGH) and 136-139 (NKVD). A G4 region spans residues 136 to 139 (NKVD). The G5 stretch occupies residues 174-176 (SAL).

The protein belongs to the TRAFAC class translation factor GTPase superfamily. Classic translation factor GTPase family. EF-Tu/EF-1A subfamily. In terms of assembly, monomer.

It is found in the cytoplasm. The enzyme catalyses GTP + H2O = GDP + phosphate + H(+). In terms of biological role, GTP hydrolase that promotes the GTP-dependent binding of aminoacyl-tRNA to the A-site of ribosomes during protein biosynthesis. This chain is Elongation factor Tu, found in Bdellovibrio bacteriovorus (strain ATCC 15356 / DSM 50701 / NCIMB 9529 / HD100).